The primary structure comprises 29 residues: Dermaseptin-J8 (29 aa).

As to expression, expressed by the skin glands.

It localises to the secreted. Its function is as follows. Has antimicrobial activity. The chain is Dermaseptin-J8 from Phasmahyla jandaia (Jandaia leaf frog).